The primary structure comprises 118 residues: Fluoride-specific ion channel FluC 1 (118 aa).

4 consecutive transmembrane segments (helical) span residues 5–25, 39–59, 61–81, and 98–118; these read FLLV…ISIF, FFIN…ALGP, WQLF…TFKV, and YVGL…MLGV. Na(+) contacts are provided by G71 and T74.

It belongs to the fluoride channel Fluc/FEX (TC 1.A.43) family.

Its subcellular location is the cell membrane. The enzyme catalyses fluoride(in) = fluoride(out). Its activity is regulated as follows. Na(+) is not transported, but it plays an essential structural role and its presence is essential for fluoride channel function. In terms of biological role, fluoride-specific ion channel. Important for reducing fluoride concentration in the cell, thus reducing its toxicity. The sequence is that of Fluoride-specific ion channel FluC 1 from Listeria innocua serovar 6a (strain ATCC BAA-680 / CLIP 11262).